The sequence spans 428 residues: Histidine--tRNA ligase (428 aa).

Belongs to the class-II aminoacyl-tRNA synthetase family. In terms of assembly, homodimer.

The protein localises to the cytoplasm. It catalyses the reaction tRNA(His) + L-histidine + ATP = L-histidyl-tRNA(His) + AMP + diphosphate + H(+). The sequence is that of Histidine--tRNA ligase from Buchnera aphidicola subsp. Schizaphis graminum (strain Sg).